A 168-amino-acid polypeptide reads, in one-letter code: 2-C-methyl-D-erythritol 2,4-cyclodiphosphate synthase (168 aa).

D11 and H13 together coordinate a divalent metal cation. 4-CDP-2-C-methyl-D-erythritol 2-phosphate is bound by residues 11–13 (DVH) and 41–42 (HS). An a divalent metal cation-binding site is contributed by H49. 4-CDP-2-C-methyl-D-erythritol 2-phosphate-binding positions include 63 to 65 (DIG), 68 to 72 (FPDTD), 139 to 142 (TTTE), F146, and R149.

This sequence belongs to the IspF family. Homotrimer. It depends on a divalent metal cation as a cofactor.

It catalyses the reaction 4-CDP-2-C-methyl-D-erythritol 2-phosphate = 2-C-methyl-D-erythritol 2,4-cyclic diphosphate + CMP. Its pathway is isoprenoid biosynthesis; isopentenyl diphosphate biosynthesis via DXP pathway; isopentenyl diphosphate from 1-deoxy-D-xylulose 5-phosphate: step 4/6. Its function is as follows. Involved in the biosynthesis of isopentenyl diphosphate (IPP) and dimethylallyl diphosphate (DMAPP), two major building blocks of isoprenoid compounds. Catalyzes the conversion of 4-diphosphocytidyl-2-C-methyl-D-erythritol 2-phosphate (CDP-ME2P) to 2-C-methyl-D-erythritol 2,4-cyclodiphosphate (ME-CPP) with a corresponding release of cytidine 5-monophosphate (CMP). This is 2-C-methyl-D-erythritol 2,4-cyclodiphosphate synthase from Psychrobacter arcticus (strain DSM 17307 / VKM B-2377 / 273-4).